A 494-amino-acid chain; its full sequence is DUF21 domain-containing protein At4g14240 (494 aa).

Residues 1 to 43 are Extracellular-facing; it reads MHLINAVAAARILSGIGQSNGNNGGEAIPFGSFEWITYAGISC. The 183-residue stretch at 31 to 213 folds into the CNNM transmembrane domain; that stretch reads GSFEWITYAG…GKGGELTHDE (183 aa). Residues 44–64 form a helical membrane-spanning segment; sequence FLVLFAGIMSGLTLGLMSLGL. The Cytoplasmic portion of the chain corresponds to 65 to 93; it reads VELEILQRSGTPNEKKQAAAIFPVVQKQH. A helical transmembrane segment spans residues 94 to 114; sequence QLLVTLLLCNAMAMEGLPIYL. Residues 115–121 lie on the Extracellular side of the membrane; sequence DKLFNEY. Residues 122-142 traverse the membrane as a helical segment; that stretch reads VAIILSVTFVLAFGEVIPQAI. At 143 to 159 the chain is on the cytoplasmic side; sequence CTRYGLAVGANFVWLVR. A helical membrane pass occupies residues 160–180; the sequence is ILMTLCYPIAFPIGKILDLVL. The Extracellular segment spans residues 181 to 494; it reads GHNDALFRRA…TITEPIRRNN (314 aa). 3 CBS domains span residues 232-292, 297-352, and 364-425; these read MTPI…TETL, CIRR…SNDS, and GNHD…IVDE. N-linked (GlcNAc...) asparagine glycans are attached at residues Asn-350 and Asn-385. The interval 459 to 494 is disordered; the sequence is QKGTGGQNKQGQTNKVPGQEQDKMLGTITEPIRRNN.

It is found in the membrane. This Arabidopsis thaliana (Mouse-ear cress) protein is DUF21 domain-containing protein At4g14240 (CBSDUF1).